The sequence spans 223 residues: Ribosomal RNA small subunit methyltransferase G (223 aa).

S-adenosyl-L-methionine is bound by residues glycine 83, leucine 88, 134-135 (AE), and arginine 152.

This sequence belongs to the methyltransferase superfamily. RNA methyltransferase RsmG family.

Its subcellular location is the cytoplasm. Specifically methylates the N7 position of guanine in position 518 of 16S rRNA. The chain is Ribosomal RNA small subunit methyltransferase G from Corynebacterium diphtheriae (strain ATCC 700971 / NCTC 13129 / Biotype gravis).